Consider the following 251-residue polypeptide: Triosephosphate isomerase (251 aa).

9–11 contributes to the substrate binding site; the sequence is NWK. The active-site Electrophile is the histidine 95. The Proton acceptor role is filled by glutamate 167. Substrate is bound by residues glycine 173, serine 212, and 233 to 234; that span reads GG.

Belongs to the triosephosphate isomerase family. Homodimer.

It localises to the cytoplasm. The enzyme catalyses D-glyceraldehyde 3-phosphate = dihydroxyacetone phosphate. It functions in the pathway carbohydrate biosynthesis; gluconeogenesis. It participates in carbohydrate degradation; glycolysis; D-glyceraldehyde 3-phosphate from glycerone phosphate: step 1/1. Its function is as follows. Involved in the gluconeogenesis. Catalyzes stereospecifically the conversion of dihydroxyacetone phosphate (DHAP) to D-glyceraldehyde-3-phosphate (G3P). In Pseudomonas putida (strain W619), this protein is Triosephosphate isomerase.